The sequence spans 336 residues: Atypical chemokine receptor 1 (336 aa).

The Extracellular portion of the chain corresponds to 1 to 63 (MGNCLHPAEL…CNLLDDSALP (63 aa)). Asn16, Asn27, and Asn33 each carry an N-linked (GlcNAc...) asparagine glycan. Intrachain disulfides connect Cys51–Cys276 and Cys129–Cys195. The chain crosses the membrane as a helical span at residues 64 to 84 (FFILVSVLGILASGIVLFMFF). Topologically, residues 85–95 (RPLFHWQLCPG) are cytoplasmic. Residues 96–116 (WPVLAQLAVGSALFSIVVPIL) form a helical membrane-spanning segment. Topologically, residues 117–129 (APGLGNTRSSALC) are extracellular. A helical transmembrane segment spans residues 130–153 (SLGYCVWYGSAFAQALLLGCHASL). Topologically, residues 154 to 166 (GPKLGADQVPGLT) are cytoplasmic. The helical transmembrane segment at 167–187 (LGLSVGLWGVAALLTLPVTLA) threads the bilayer. The Extracellular segment spans residues 188–207 (SGASGGLCTPVYSMELKALQ). A helical membrane pass occupies residues 208–228 (ATHAVACLAIFVLLPLGLFGA). Topologically, residues 229–244 (KGLKKALGMGPGPWMN) are cytoplasmic. The chain crosses the membrane as a helical span at residues 245 to 265 (ILWAWFIFWWPHGVVLGLDFL). The Extracellular portion of the chain corresponds to 266–287 (VRSKLLLLSTCLAQQALDLLLN). A helical membrane pass occupies residues 288 to 308 (LAEALAILHCVATPLLLALFC). At 309–336 (HQATRTLLPSLPLPEGWSSHLDTLGSKS) the chain is on the cytoplasmic side.

The protein belongs to the G-protein coupled receptor 1 family. Atypical chemokine receptor subfamily.

The protein resides in the early endosome. Its subcellular location is the recycling endosome. It localises to the membrane. Its function is as follows. Atypical chemokine receptor that controls chemokine levels and localization via high-affinity chemokine binding that is uncoupled from classic ligand-driven signal transduction cascades, resulting instead in chemokine sequestration, degradation, or transcytosis. Also known as interceptor (internalizing receptor) or chemokine-scavenging receptor or chemokine decoy receptor. Has a promiscuous chemokine-binding profile, interacting with inflammatory chemokines of both the CXC and the CC subfamilies but not with homeostatic chemokines. Acts as a receptor for chemokines including CCL2, CCL5, CCL7, CCL11, CCL13, CCL14, CCL17, CXCL5, CXCL6, IL8/CXCL8, CXCL11, GRO, RANTES, MCP-1 and TARC. May regulate chemokine bioavailability and, consequently, leukocyte recruitment through two distinct mechanisms: when expressed in endothelial cells, it sustains the abluminal to luminal transcytosis of tissue-derived chemokines and their subsequent presentation to circulating leukocytes; when expressed in erythrocytes, serves as blood reservoir of cognate chemokines but also as a chemokine sink, buffering potential surges in plasma chemokine levels. The chain is Atypical chemokine receptor 1 (ACKR1) from Papio hamadryas (Hamadryas baboon).